A 468-amino-acid polypeptide reads, in one-letter code: Zinc finger protein mex-5 (468 aa).

Positions 1–19 (MKAASNSVSSAGGSVSPTT) are enriched in low complexity. The tract at residues 1-32 (MKAASNSVSSAGGSVSPTTTQPPLPPGQSSHP) is disordered. The residue at position 186 (T186) is a Phosphothreonine; by mbk-2. Residues 243–254 (NHFHEHRGEKFG) show a composition bias toward basic and acidic residues. The segment at 243–269 (NHFHEHRGEKFGRRGFPIPETDSQQPP) is disordered. 2 consecutive C3H1-type zinc fingers follow at residues 270-299 (NYKTRLCMMHASGIKPCDMGARCKFAHGLK) and 314-344 (KYKTKLCKNFARGGTGFCPYGLRCEFVHPTD). Positions 414 to 468 (DLQAGGDYNQPESNEDDLPPHLRRNRRENPPMNKRRTSLSTKWTSEENLGLRGHY) are disordered. Over residues 451–460 (SLSTKWTSEE) the composition is skewed to polar residues. The residue at position 458 (S458) is a Phosphoserine.

In terms of assembly, interacts (when phosphorylated on Thr-186) with plk-1 (via POLO box domain) and plk-2 (via POLO box domain). Post-translationally, phosphorylation on Ser-458 by par-1 promotes localization of the protein to the anterior cytoplasm of the zygote. Phosphorylation by mbk-1 appears to be required for subsequent phosphorylation by plk-1. In terms of tissue distribution, asymmetrically localized to the anterior of the zygote before mitotic division, then differentially distributed to the somatic blastomere precursor cells.

It is found in the cytoplasm. Its function is as follows. Functions with mex-6 to affect embryonic viability, establish soma germline asymmetry in embryos and establish plk-1, pie-1, mex-1, and pos-1 asymmetry in embryos. Also affects formation of intestinal cells. Binds to mRNA in vitro, and inhibits pgl-3-mediated P-granule formation, probably by competing with pgl-3 for binding to mRNA. Required for neg-1 expression in anterior blastomeres during embryogenesis. The sequence is that of Zinc finger protein mex-5 from Caenorhabditis elegans.